The primary structure comprises 204 residues: Ancillary SecYEG translocon subunit (204 aa).

At methionine 1–lysine 23 the chain is on the cytoplasmic side. A helical membrane pass occupies residues phenylalanine 24–serine 44. Residues histidine 45–leucine 204 are Periplasmic-facing.

Belongs to the YfgM family. As to quaternary structure, interacts with the SecYEG translocon. Forms a complex with PpiD.

It localises to the cell inner membrane. May mediate protein transfer from the SecYEG translocon to the periplasmic chaperone network via its periplasmic C-terminal region. The sequence is that of Ancillary SecYEG translocon subunit (1057) from Aggregatibacter actinomycetemcomitans (Actinobacillus actinomycetemcomitans).